Here is a 224-residue protein sequence, read N- to C-terminus: Pyridoxal 5'-phosphate synthase subunit PdxT (224 aa).

Residue 55–57 participates in L-glutamine binding; that stretch reads GES. The active-site Nucleophile is C87. L-glutamine-binding positions include R113 and 142–143; that span reads IR. Active-site charge relay system residues include H178 and E180.

It belongs to the glutaminase PdxT/SNO family. As to quaternary structure, in the presence of PdxS, forms a dodecamer of heterodimers. Only shows activity in the heterodimer.

It catalyses the reaction aldehydo-D-ribose 5-phosphate + D-glyceraldehyde 3-phosphate + L-glutamine = pyridoxal 5'-phosphate + L-glutamate + phosphate + 3 H2O + H(+). The catalysed reaction is L-glutamine + H2O = L-glutamate + NH4(+). It participates in cofactor biosynthesis; pyridoxal 5'-phosphate biosynthesis. Catalyzes the hydrolysis of glutamine to glutamate and ammonia as part of the biosynthesis of pyridoxal 5'-phosphate. The resulting ammonia molecule is channeled to the active site of PdxS. The sequence is that of Pyridoxal 5'-phosphate synthase subunit PdxT from Syntrophus aciditrophicus (strain SB).